We begin with the raw amino-acid sequence, 316 residues long: D-alanine--D-alanine ligase (316 aa).

The 196-residue stretch at 109–304 (KRLWRGMDLP…FDEMVLQILA (196 aa)) folds into the ATP-grasp domain. Residue 135 to 190 (AADLGLPLIVKPAREGSSLGMMKVESIEALQSAYREAVIFDTAVFAERWLPGAEYT) participates in ATP binding. 3 residues coordinate Mg(2+): Asp258, Glu271, and Asn273.

It belongs to the D-alanine--D-alanine ligase family. Requires Mg(2+) as cofactor. Mn(2+) is required as a cofactor.

It localises to the cytoplasm. The catalysed reaction is 2 D-alanine + ATP = D-alanyl-D-alanine + ADP + phosphate + H(+). Its pathway is cell wall biogenesis; peptidoglycan biosynthesis. Its function is as follows. Cell wall formation. This Nitrosococcus oceani (strain ATCC 19707 / BCRC 17464 / JCM 30415 / NCIMB 11848 / C-107) protein is D-alanine--D-alanine ligase.